Reading from the N-terminus, the 199-residue chain is Charged multivesicular body protein 1B2 (199 aa).

Positions 15–47 (AKELNRNAKKCDKEEKAEKAKIKKAIQKGNTEV) form a coiled coil. Residues 132 to 156 (MEDTMSSTTTLTTPQNQVDMLLQEM) are interaction with IST1. Residues 167–199 (ELPQGQTGSVGASVASTEQDELSQRLARLRDQV) form a disordered region. The span at 170 to 183 (QGQTGSVGASVAST) shows a compositional bias: polar residues. The tract at residues 174–199 (GSVGASVASTEQDELSQRLARLRDQV) is interaction with SPAST. Positions 177 to 199 (GASVASTEQDELSQRLARLRDQV) form a coiled coil. The segment at 180-196 (VASTEQDELSQRLARLR) is interaction with VPS4A, MITD1 and STAMBP. The interval 180–199 (VASTEQDELSQRLARLRDQV) is interaction with VTA1. An interaction with VPS4B region spans residues 183–199 (TEQDELSQRLARLRDQV). Positions 186–196 (DELSQRLARLR) match the MIT-interacting motif motif.

The protein belongs to the SNF7 family. In terms of assembly, probable peripherally associated component of the endosomal sorting required for transport complex III (ESCRT-III). ESCRT-III components are thought to multimerize to form a flat lattice on the perimeter membrane of the endosome. Several assembly forms of ESCRT-III may exist that interact and act sequentially. Interacts with CHMP1A. Interacts with VTA1; the interaction probably involves the open conformation of CHMP1B. Interacts with CHMP2A. Interacts with VPS4A; the interaction is direct. Interacts with VPS4B; the interaction is direct. Interacts with SPAST (via MIT domain); the interaction is direct. Interacts with IST1. Interacts with MITD1. Interacts with STAMBP.

It localises to the cytoplasm. It is found in the cytosol. Its subcellular location is the endosome. The protein resides in the late endosome membrane. Probable peripherally associated component of the endosomal sorting required for transport complex III (ESCRT-III) which is involved in multivesicular bodies (MVBs) formation and sorting of endosomal cargo proteins into MVBs. MVBs contain intraluminal vesicles (ILVs) that are generated by invagination and scission from the limiting membrane of the endosome and mostly are delivered to lysosomes enabling degradation of membrane proteins, such as stimulated growth factor receptors, lysosomal enzymes and lipids. The MVB pathway appears to require the sequential function of ESCRT-O, -I,-II and -III complexes. ESCRT-III proteins mostly dissociate from the invaginating membrane before the ILV is released. The ESCRT machinery also functions in topologically equivalent membrane fission events, such as the terminal stages of cytokinesis. ESCRT-III proteins are believed to mediate the necessary vesicle extrusion and/or membrane fission activities, possibly in conjunction with the AAA ATPase VPS4. Involved in cytokinesis. Involved in recruiting VPS4A and/or VPS4B and SPAST to the midbody of dividing cells. In Mus musculus (Mouse), this protein is Charged multivesicular body protein 1B2.